Consider the following 797-residue polypeptide: Kinesin-like protein Klp68D (797 aa).

One can recognise a Kinesin motor domain in the interval 19–344; sequence CVQVVVRCRP…LRYASRAKSI (326 aa). Position 106-113 (106-113) interacts with ATP; the sequence is GQTGTGKT. Residues 350–384 adopt a coiled-coil conformation; it reads KNEDPQDAKLKEYQEEIERLKRLIAPQQQQRSEKQ. Disordered stretches follow at residues 371-450, 610-656, and 722-797; these read RLIA…ELER, SSFP…PSSL, and ANSS…LVNK. Basic residues predominate over residues 386 to 396; it reads TIKKQRVKKPK. A compositionally biased stretch (acidic residues) spans 417-431; it reads QVDEDRDSDGDGAES. Residues 432 to 450 are compositionally biased toward basic and acidic residues; sequence ESDKENEAEVAKSNEELER. Residues 432 to 580 are a coiled coil; sequence ESDKENEAEV…LVKELKRQLL (149 aa). Residues 626–638 show a composition bias toward basic residues; it reads GYRRPVSHPQRRR. The span at 782–791 shows a compositional bias: low complexity; it reads KKPASAYPKA.

This sequence belongs to the TRAFAC class myosin-kinesin ATPase superfamily. Kinesin family. Kinesin II subfamily.

It localises to the cytoplasm. It is found in the cytoskeleton. Plus-end directed microtubule motor that may be used for anterograde axonal transport and could conceivably move cargos in fly neurons different than those moved by kinesin heavy chain or other plus-end directed motors. This chain is Kinesin-like protein Klp68D, found in Drosophila pseudoobscura pseudoobscura (Fruit fly).